Here is a 138-residue protein sequence, read N- to C-terminus: Small ribosomal subunit protein uS8 (138 aa).

The protein belongs to the universal ribosomal protein uS8 family. In terms of assembly, part of the 30S ribosomal subunit. Contacts proteins S5 and S12.

Functionally, one of the primary rRNA binding proteins, it binds directly to 16S rRNA central domain where it helps coordinate assembly of the platform of the 30S subunit. The polypeptide is Small ribosomal subunit protein uS8 (rpsH) (Thermus thermophilus (strain ATCC BAA-163 / DSM 7039 / HB27)).